We begin with the raw amino-acid sequence, 514 residues long: Threonine synthase (514 aa).

At Lys-117 the chain carries N6-(pyridoxal phosphate)lysine. Gly-270, Asn-271, Phe-272, and Asp-274 together coordinate pyridoxal 5'-phosphate. Ser-319 and Ser-321 each carry phosphoserine. Thr-449 lines the pyridoxal 5'-phosphate pocket.

This sequence belongs to the threonine synthase family. The cofactor is pyridoxal 5'-phosphate.

It catalyses the reaction O-phospho-L-homoserine + H2O = L-threonine + phosphate. The protein operates within amino-acid biosynthesis; L-threonine biosynthesis; L-threonine from L-aspartate: step 5/5. In terms of biological role, catalyzes the gamma-elimination of phosphate from L-phosphohomoserine and the beta-addition of water to produce L-threonine. The sequence is that of Threonine synthase (thrc) from Schizosaccharomyces pombe (strain 972 / ATCC 24843) (Fission yeast).